The primary structure comprises 349 residues: MDTIAARALTVMRACATLQEARIVLEANVMEILGIAINRYNGLTLRGVTMRPTSLAQRNEMFFMCLDMMLSATGINVGPISPDYTQHMATIGVLATPEIPFTTEAANEIARVTGETSTWGPARQPYGFFLETEETFQPGRWFMRAAQAVTAVVCGPDMIQVSLNAGARGDVQQIFQGRNDPMMIYLVWRRIENFAMAQGNSQQTQAGVTVSVGGVDMRAGRIIAWDGQAALHVHNPTQQNAMVQIQVVFYISMDKTLNQYPALTAEIFNVYSFRDHTWHGLRTAILNRTTLPNMLPPIFPPNDRDSILTLLPLSTLADVYTVLRPEFAIHGVNPMPGPLTRAIARAAYV.

The N-linked (GlcNAc...) asparagine; by host glycan is linked to Asn-287.

The protein belongs to the orbivirus VP7 family. In terms of assembly, homotrimer that assemble in a complex of 260 capsomers on an inner scaffold composed of VP3.

The protein resides in the virion. The VP7 protein is one of the five proteins (with VP1, VP3, VP4, and VP6) which form the inner capsid of the virus. This Antilocapra americana (Pronghorn) protein is Core protein VP7 (Segment-7).